The primary structure comprises 241 residues: Sugar fermentation stimulation protein homolog (241 aa).

The protein belongs to the SfsA family.

The sequence is that of Sugar fermentation stimulation protein homolog from Halorhodospira halophila (strain DSM 244 / SL1) (Ectothiorhodospira halophila (strain DSM 244 / SL1)).